Here is a 132-residue protein sequence, read N- to C-terminus: N,N-dimethylformamidase alpha subunit (132 aa).

In terms of assembly, heterotetramer of two DmfA1 (alpha) and two DmfA2 (beta) subunits.

It catalyses the reaction N,N-dimethylformamide + H2O = dimethylamine + formate. Activity is slightly inhibited by Mg(2+) and Mn(2+), and slightly increased by Cu(2+). Activity is slightly inhibited by the chelating agents 8-hydroxyquinoline, ethylenediaminetetraacetate, o-phenanthroline and 2,2'-bipyridyl. Functionally, hydrolyzes N,N-dimethylformamide, and to a lesser extent N,N-dimethylacetamide and N,N-diethylacetamide. Has no activity against the substituted amides N-methylformamide, N-ethylformamide, N-ethylformamide and N-methylacetamide or the unsubstituted amides formamide, nicotinamide, acetoamide, benzamide, acetamide and acrylamide. The chain is N,N-dimethylformamidase alpha subunit from Alcaligenes sp.